We begin with the raw amino-acid sequence, 440 residues long: Xaa-Pro dipeptidase (440 aa).

Positions 244, 255, 335, 380, and 419 each coordinate Mn(2+).

It belongs to the peptidase M24B family. Bacterial-type prolidase subfamily. Mn(2+) serves as cofactor.

It carries out the reaction Xaa-L-Pro dipeptide + H2O = an L-alpha-amino acid + L-proline. Its function is as follows. Splits dipeptides with a prolyl residue in the C-terminal position. This is Xaa-Pro dipeptidase from Shewanella baltica (strain OS195).